Here is a 400-residue protein sequence, read N- to C-terminus: Unsaturated glucuronyl hydrolase (400 aa).

Residues 1–20 (MRKLVYLVLVLGLTFLNVRC) form the signal peptide. The active-site Nucleophile is D120. D181 (proton donor) is an active-site residue.

Belongs to the glycosyl hydrolase 88 family.

It is found in the cell surface. Its function is as follows. Unsaturated glucuronyl hydrolase involved in ulvan degradation. Ulvan is the main polysaccharide component of the Ulvales (green seaweed) cell wall. It is composed of disaccharide building blocks comprising 3-sulfated rhamnose (Rha3S) linked to D-glucuronic acid (GlcA), L-iduronic acid (IduA), or D-xylose (Xyl). Unsaturated glucuronyl hydrolase catalyzes the cleavage of the unsaturated 4-deoxy-L-threo-hex-4-enopyranosiduronic acid (deltaUA) at the non-reducing end of ulvan oligomers, thus forming 5-dehydro-4-deoxy-D-glucuronate. The protein is Unsaturated glucuronyl hydrolase of Formosa agariphila (strain DSM 15362 / KCTC 12365 / LMG 23005 / KMM 3901 / M-2Alg 35-1).